The chain runs to 305 residues: Protoheme IX farnesyltransferase (305 aa).

9 helical membrane passes run 31-51 (VMSL…YSVH), 52-72 (PFIA…AGAI), 102-119 (ALSF…FMAL), 123-145 (LLAS…IWLK), 151-171 (NIVI…AAVS), 179-199 (IILF…LALF), 218-238 (ILYT…VSLM), 240-260 (FFIG…GLVF), and 281-301 (FAYS…TSTI).

The protein belongs to the UbiA prenyltransferase family. Protoheme IX farnesyltransferase subfamily.

It localises to the cell inner membrane. The catalysed reaction is heme b + (2E,6E)-farnesyl diphosphate + H2O = Fe(II)-heme o + diphosphate. The protein operates within porphyrin-containing compound metabolism; heme O biosynthesis; heme O from protoheme: step 1/1. Functionally, converts heme B (protoheme IX) to heme O by substitution of the vinyl group on carbon 2 of heme B porphyrin ring with a hydroxyethyl farnesyl side group. In Rickettsia akari (strain Hartford), this protein is Protoheme IX farnesyltransferase.